The sequence spans 204 residues: uncharacterized protein (204 aa).

Residues 1-10 (MQQAITQQEK) are compositionally biased toward polar residues. Disordered stretches follow at residues 1-20 (MQQA…LPNR) and 70-99 (DEAR…KNTE). The region spanning 131 to 204 (VRDSKKFGLQ…TVTDCVVIGM (74 aa)) is the SPOR domain.

It to E.coli FtsN repeat regions.

This is an uncharacterized protein from Haemophilus influenzae (strain ATCC 51907 / DSM 11121 / KW20 / Rd).